Here is a 441-residue protein sequence, read N- to C-terminus: Xaa-Pro dipeptidase (441 aa).

Mn(2+) is bound by residues Asp244, Asp255, His336, Glu381, and Glu420.

It belongs to the peptidase M24B family. Bacterial-type prolidase subfamily. Requires Mn(2+) as cofactor.

It carries out the reaction Xaa-L-Pro dipeptide + H2O = an L-alpha-amino acid + L-proline. Its function is as follows. Splits dipeptides with a prolyl residue in the C-terminal position. The sequence is that of Xaa-Pro dipeptidase from Xanthomonas campestris pv. campestris (strain 8004).